Reading from the N-terminus, the 686-residue chain is LEAF RUST 10 DISEASE-RESISTANCE LOCUS RECEPTOR-LIKE PROTEIN KINASE-like 1.3 (686 aa).

An N-terminal signal peptide occupies residues 1–33; the sequence is MFSPVLFRFSKPNSFLVLLFFLSYIHFLPCAQS. Topologically, residues 34 to 264 are extracellular; sequence QREPCDTLFR…AGLSKKGKIG (231 aa). N-linked (GlcNAc...) asparagine glycans are attached at residues Asn-76, Asn-93, Asn-175, Asn-190, and Asn-236. A helical membrane pass occupies residues 265–285; sequence IGFASGFLGATLIGGCLLCIF. Residues 286–686 are Cytoplasmic-facing; sequence IRRRKKLATQ…SSSNTTASSF (401 aa). Residues 358-633 enclose the Protein kinase domain; that stretch reads ENFSKELGDG…DEIVEVLRVI (276 aa). Residues 364–372 and Lys-386 contribute to the ATP site; that span reads LGDGGFGTV. Tyr-432 is modified (phosphotyrosine). The active-site Proton acceptor is Asp-482. Ser-515 carries the post-translational modification Phosphoserine. Phosphothreonine occurs at positions 516 and 521. At Tyr-529 the chain carries Phosphotyrosine. The tract at residues 657-686 is disordered; sequence GLLKHGVPPPLSPETDKTTASSSNTTASSF. Over residues 674–686 the composition is skewed to low complexity; that stretch reads TTASSSNTTASSF.

Belongs to the protein kinase superfamily. Ser/Thr protein kinase family.

Its subcellular location is the cell membrane. It carries out the reaction L-seryl-[protein] + ATP = O-phospho-L-seryl-[protein] + ADP + H(+). It catalyses the reaction L-threonyl-[protein] + ATP = O-phospho-L-threonyl-[protein] + ADP + H(+). In Arabidopsis thaliana (Mouse-ear cress), this protein is LEAF RUST 10 DISEASE-RESISTANCE LOCUS RECEPTOR-LIKE PROTEIN KINASE-like 1.3.